Here is a 1387-residue protein sequence, read N- to C-terminus: DNA-directed RNA polymerase subunit beta' (1387 aa).

The Zn(2+) site is built by C70, C72, C85, and C88. Mg(2+) contacts are provided by D461, D463, and D465. Residues C808, C882, C889, and C892 each coordinate Zn(2+). Residues 1367–1387 (QDEAKGVGQETPRLSGQEAAE) are disordered.

The protein belongs to the RNA polymerase beta' chain family. As to quaternary structure, the RNAP catalytic core consists of 2 alpha, 1 beta, 1 beta' and 1 omega subunit. When a sigma factor is associated with the core the holoenzyme is formed, which can initiate transcription. Mg(2+) is required as a cofactor. It depends on Zn(2+) as a cofactor.

The catalysed reaction is RNA(n) + a ribonucleoside 5'-triphosphate = RNA(n+1) + diphosphate. DNA-dependent RNA polymerase catalyzes the transcription of DNA into RNA using the four ribonucleoside triphosphates as substrates. The chain is DNA-directed RNA polymerase subunit beta' from Granulibacter bethesdensis (strain ATCC BAA-1260 / CGDNIH1).